Reading from the N-terminus, the 506-residue chain is Probable Xaa-Pro aminopeptidase BDCG_04966 (506 aa).

The Mn(2+) site is built by aspartate 285, aspartate 296, glutamate 433, and glutamate 471.

Belongs to the peptidase M24B family. Mn(2+) serves as cofactor.

The catalysed reaction is Release of any N-terminal amino acid, including proline, that is linked to proline, even from a dipeptide or tripeptide.. Its function is as follows. Catalyzes the removal of a penultimate prolyl residue from the N-termini of peptides. In Ajellomyces dermatitidis (strain ER-3 / ATCC MYA-2586) (Blastomyces dermatitidis), this protein is Probable Xaa-Pro aminopeptidase BDCG_04966.